Consider the following 406-residue polypeptide: Leu/Ile/Val-binding protein homolog 5 (406 aa).

The first 29 residues, 1-29 (MIGTRLPAWTRVLACGVAGLSLMTISAKA), serve as a signal peptide directing secretion.

This sequence belongs to the leucine-binding protein family.

Component of an amino-acid transport system. The protein is Leu/Ile/Val-binding protein homolog 5 of Brucella suis biovar 1 (strain 1330).